Consider the following 82-residue polypeptide: MKNLKKAAAVTMVAGGLIAAGAGMASATDGGAHAHGKAVGSPGVASGNLVQAPIHIPVNAVGNSVNVIGVLNPAFGNLGVNH.

Residues 1-27 form the signal peptide; that stretch reads MKNLKKAAAVTMVAGGLIAAGAGMASA. The Chaplin domain maps to 41–81; it reads SPGVASGNLVQAPIHIPVNAVGNSVNVIGVLNPAFGNLGVN.

This sequence belongs to the chaplin family. Short chaplin subfamily.

It localises to the cell surface. It is found in the secreted. The protein localises to the cell wall. The protein resides in the fimbrium. In terms of biological role, one of 8 partially redundant surface-active proteins required for efficient formation of aerial mycelium; the short chaplins assemble into a hydrophobic, amyloidal fibrillar surface layer that envelopes and protects aerial hyphae and spores, presumably anchored to the long chaplins. Chaplins have an overlapping function with the surface-active SapB peptide; chaplins are essential on minimal medium while on rich medium both chaplins and SapB are required for efficient aerial hyphae formation. Chaplins are also involved in cell attachment to a hydrophobic surface. Forms amyloid fibrils in vitro probably composed of stacked beta-sheets, at low extracellular concentrations individually restores the ability to form aerial hyphae to a chaplin-deficient strain, but does so less well than other short chaplins. A small chaplin extract (ChpD, ChpE, ChpF, ChpG and ChpH) self-assembles into 2 different amyloids; small fibrils at the air-water interface form an amphipathic membrane that resembles spore-surface structures involved in aerial hyphae formation, and hydrophilic fibrils in solution that resemble the fibers that attach cells to a hydrophobic surface. At the air-water interface the hydrophilic surface is in contact with water (probably equivalent to the peptidoglycan layer), while the hydrophobic face is exposed to the air, making the surface of the aerial hyphae hydrophobic. A minimal chaplin strain capable of forming aerial mycelium/hyphae on minimal medium contains ChpC, ChpE and ChpH. The strain also has restored rodlet formation on the hyphae surface. A second strain with ChpA, ChpD and ChpE makes slightly less robust hyphae. This essential chaplin may coordinate the assembly and/or polymerization of the other chaplins. A small chaplin extract applied to a chaplin-deficient strain restores aerial hyphae formation. The small chaplin extract forms an amyloid-like structure similar to that seen on the surface of cells without rodlets (rdlA-rdlB deletions), and is highly surface active, reducing surface tension from 72 to 26 mJ/m(2), which probably allows escape of hyphae from an aqueous environment into air. This chain is Chaplin-E, found in Streptomyces coelicolor (strain ATCC BAA-471 / A3(2) / M145).